The following is a 553-amino-acid chain: CTP synthase (553 aa).

The interval 1–270 is amidoligase domain; that stretch reads MTKYVFVTGG…DRLICEELRL (270 aa). Ser13 lines the CTP pocket. UTP is bound at residue Ser13. ATP is bound by residues 14–19 and Asp71; that span reads SLGKGI. Positions 71 and 144 each coordinate Mg(2+). CTP-binding positions include 151–153, 191–196, and Lys227; these read DIE and KTKPTQ. UTP-binding positions include 191-196 and Lys227; that span reads KTKPTQ. Residues 295 to 547 form the Glutamine amidotransferase type-1 domain; the sequence is TIGMVGKYVD…VQAALACQQT (253 aa). Gly356 contributes to the L-glutamine binding site. Cys383 (nucleophile; for glutamine hydrolysis) is an active-site residue. Residues 384-387, Glu407, and Arg473 each bind L-glutamine; that span reads LGMQ. Active-site residues include His520 and Glu522.

Belongs to the CTP synthase family. As to quaternary structure, homotetramer.

It catalyses the reaction UTP + L-glutamine + ATP + H2O = CTP + L-glutamate + ADP + phosphate + 2 H(+). The catalysed reaction is L-glutamine + H2O = L-glutamate + NH4(+). It carries out the reaction UTP + NH4(+) + ATP = CTP + ADP + phosphate + 2 H(+). Its pathway is pyrimidine metabolism; CTP biosynthesis via de novo pathway; CTP from UDP: step 2/2. Its activity is regulated as follows. Allosterically activated by GTP, when glutamine is the substrate; GTP has no effect on the reaction when ammonia is the substrate. The allosteric effector GTP functions by stabilizing the protein conformation that binds the tetrahedral intermediate(s) formed during glutamine hydrolysis. Inhibited by the product CTP, via allosteric rather than competitive inhibition. Its function is as follows. Catalyzes the ATP-dependent amination of UTP to CTP with either L-glutamine or ammonia as the source of nitrogen. Regulates intracellular CTP levels through interactions with the four ribonucleotide triphosphates. This Burkholderia mallei (strain NCTC 10229) protein is CTP synthase.